The following is a 286-amino-acid chain: ATP synthase gamma chain (286 aa).

This sequence belongs to the ATPase gamma chain family. In terms of assembly, F-type ATPases have 2 components, CF(1) - the catalytic core - and CF(0) - the membrane proton channel. CF(1) has five subunits: alpha(3), beta(3), gamma(1), delta(1), epsilon(1). CF(0) has three main subunits: a, b and c.

It localises to the cell inner membrane. Produces ATP from ADP in the presence of a proton gradient across the membrane. The gamma chain is believed to be important in regulating ATPase activity and the flow of protons through the CF(0) complex. The chain is ATP synthase gamma chain from Shewanella sediminis (strain HAW-EB3).